Reading from the N-terminus, the 269-residue chain is Pertussis toxin subunit 1 homolog (269 aa).

The first 34 residues, 1–34 (MRCTRAIRQTARTGWLTWLAILAVTAPVTSPAWA), serve as a signal peptide directing secretion.

It belongs to the bacterial exotoxin subunit A family.

This Bordetella bronchiseptica (strain ATCC BAA-588 / NCTC 13252 / RB50) (Alcaligenes bronchisepticus) protein is Pertussis toxin subunit 1 homolog (ptxA).